A 612-amino-acid chain; its full sequence is Protein brambleberry (612 aa).

The N-terminal stretch at methionine 1–alanine 20 is a signal peptide. A run of 2 helical transmembrane segments spans residues leucine 364–leucine 384 and leucine 417–alanine 437. Disordered regions lie at residues leucine 452–serine 476 and asparagine 555–glycine 574. Over residues proline 457–glutamate 470 the composition is skewed to basic and acidic residues. Residues arginine 556–glycine 574 show a composition bias toward low complexity.

The protein resides in the nucleus membrane. Required for nuclear membrane fusion during karyogamy. This is Protein brambleberry (bmb) from Danio rerio (Zebrafish).